The following is a 402-amino-acid chain: WAT1-related protein At5g07050 (402 aa).

A run of 10 helical transmembrane segments spans residues F20–L40, V48–F68, P74–I94, T109–F129, V149–F169, F196–L216, L229–V249, L266–V286, V293–V313, and I318–W338. EamA domains follow at residues Y29 to T159 and L208 to L337.

The protein belongs to the drug/metabolite transporter (DMT) superfamily. Plant drug/metabolite exporter (P-DME) (TC 2.A.7.4) family.

Its subcellular location is the membrane. This Arabidopsis thaliana (Mouse-ear cress) protein is WAT1-related protein At5g07050.